The primary structure comprises 294 residues: Homoserine kinase (294 aa).

Position 83–93 (83–93 (RPKSGLGSSGA)) interacts with ATP.

This sequence belongs to the GHMP kinase family. Homoserine kinase subfamily.

It is found in the cytoplasm. The catalysed reaction is L-homoserine + ATP = O-phospho-L-homoserine + ADP + H(+). It participates in amino-acid biosynthesis; L-threonine biosynthesis; L-threonine from L-aspartate: step 4/5. Functionally, catalyzes the ATP-dependent phosphorylation of L-homoserine to L-homoserine phosphate. This is Homoserine kinase from Pyrococcus abyssi (strain GE5 / Orsay).